A 472-amino-acid polypeptide reads, in one-letter code: Aspartyl/glutamyl-tRNA(Asn/Gln) amidotransferase subunit B (472 aa).

The protein belongs to the GatB/GatE family. GatB subfamily. In terms of assembly, heterotrimer of A, B and C subunits.

It catalyses the reaction L-glutamyl-tRNA(Gln) + L-glutamine + ATP + H2O = L-glutaminyl-tRNA(Gln) + L-glutamate + ADP + phosphate + H(+). The enzyme catalyses L-aspartyl-tRNA(Asn) + L-glutamine + ATP + H2O = L-asparaginyl-tRNA(Asn) + L-glutamate + ADP + phosphate + 2 H(+). Allows the formation of correctly charged Asn-tRNA(Asn) or Gln-tRNA(Gln) through the transamidation of misacylated Asp-tRNA(Asn) or Glu-tRNA(Gln) in organisms which lack either or both of asparaginyl-tRNA or glutaminyl-tRNA synthetases. The reaction takes place in the presence of glutamine and ATP through an activated phospho-Asp-tRNA(Asn) or phospho-Glu-tRNA(Gln). The sequence is that of Aspartyl/glutamyl-tRNA(Asn/Gln) amidotransferase subunit B from Campylobacter jejuni subsp. jejuni serotype O:23/36 (strain 81-176).